The following is a 283-amino-acid chain: Elongation factor Ts (283 aa).

Positions 80 to 83 are involved in Mg(2+) ion dislocation from EF-Tu; that stretch reads TDFV.

It belongs to the EF-Ts family.

Its subcellular location is the cytoplasm. Associates with the EF-Tu.GDP complex and induces the exchange of GDP to GTP. It remains bound to the aminoacyl-tRNA.EF-Tu.GTP complex up to the GTP hydrolysis stage on the ribosome. This is Elongation factor Ts from Shigella boydii serotype 18 (strain CDC 3083-94 / BS512).